Consider the following 67-residue polypeptide: Large ribosomal subunit protein uL29 (67 aa).

It belongs to the universal ribosomal protein uL29 family.

The polypeptide is Large ribosomal subunit protein uL29 (Ruminiclostridium cellulolyticum (strain ATCC 35319 / DSM 5812 / JCM 6584 / H10) (Clostridium cellulolyticum)).